The chain runs to 213 residues: Phosphatidylserine decarboxylase proenzyme (213 aa).

Ser180 functions as the Schiff-base intermediate with substrate; via pyruvic acid in the catalytic mechanism. A Pyruvic acid (Ser); by autocatalysis modification is found at Ser180.

The protein belongs to the phosphatidylserine decarboxylase family. PSD-A subfamily. In terms of assembly, heterodimer of a large membrane-associated beta subunit and a small pyruvoyl-containing alpha subunit. It depends on pyruvate as a cofactor. Is synthesized initially as an inactive proenzyme. Formation of the active enzyme involves a self-maturation process in which the active site pyruvoyl group is generated from an internal serine residue via an autocatalytic post-translational modification. Two non-identical subunits are generated from the proenzyme in this reaction, and the pyruvate is formed at the N-terminus of the alpha chain, which is derived from the carboxyl end of the proenzyme. The post-translation cleavage follows an unusual pathway, termed non-hydrolytic serinolysis, in which the side chain hydroxyl group of the serine supplies its oxygen atom to form the C-terminus of the beta chain, while the remainder of the serine residue undergoes an oxidative deamination to produce ammonia and the pyruvoyl prosthetic group on the alpha chain.

The protein localises to the cell membrane. The catalysed reaction is a 1,2-diacyl-sn-glycero-3-phospho-L-serine + H(+) = a 1,2-diacyl-sn-glycero-3-phosphoethanolamine + CO2. The protein operates within phospholipid metabolism; phosphatidylethanolamine biosynthesis; phosphatidylethanolamine from CDP-diacylglycerol: step 2/2. Functionally, catalyzes the formation of phosphatidylethanolamine (PtdEtn) from phosphatidylserine (PtdSer). This is Phosphatidylserine decarboxylase proenzyme from Carboxydothermus hydrogenoformans (strain ATCC BAA-161 / DSM 6008 / Z-2901).